A 351-amino-acid polypeptide reads, in one-letter code: uncharacterized protein (351 aa).

Positions 1–61 (MNDKRKPSFQ…RDKQEVKETR (61 aa)) are disordered. Basic and acidic residues-rich tracts occupy residues 16-38 (FQER…HFND) and 44-61 (RNEK…KETR).

This sequence belongs to the class IV-like SAM-binding methyltransferase superfamily. RNA methyltransferase TrmH family.

This is an uncharacterized protein from Haemophilus influenzae (strain ATCC 51907 / DSM 11121 / KW20 / Rd).